The sequence spans 20 residues: Short cationic peptide-4d (20 aa).

The residue at position 20 (E20) is a Glutamic acid 1-amide.

As to expression, expressed by the venom gland.

Its subcellular location is the secreted. In Cupiennius salei (American wandering spider), this protein is Short cationic peptide-4d.